A 301-amino-acid chain; its full sequence is MPIKIPDNLPAAKTLNEENIFFMDEDRAYHQDIRPLNIVIVNLMPTKIVTETQILRLIGNSPLQVNPTFIHTQTHKSQNTSKEHLIKFYETFEEIKNNKFDGMIVTGAPVETLSFENVDYWEELCRIFDWSVTNVTSTIHICWGAQAGLYHHYGIPKYELHEKLFGVFKHNLTERNIKLTRGFDDEFYAPHSRHTYVKREDIKKNPSLKILAESDEAGAYIVASENGKNIFVMGHAEYDGDTLNLEYIRDKNQGMNIKIPKNYFKDNDPEKGPMVTWRGHANLLFSNWLNYYVYQETPFEL.

Cys142 functions as the Acyl-thioester intermediate in the catalytic mechanism. The substrate site is built by Lys163 and Ser192. His235 serves as the catalytic Proton acceptor. The active site involves Glu237. Arg249 is a substrate binding site.

This sequence belongs to the MetA family.

The protein localises to the cytoplasm. The catalysed reaction is L-homoserine + acetyl-CoA = O-acetyl-L-homoserine + CoA. It participates in amino-acid biosynthesis; L-methionine biosynthesis via de novo pathway; O-acetyl-L-homoserine from L-homoserine: step 1/1. Its function is as follows. Transfers an acetyl group from acetyl-CoA to L-homoserine, forming acetyl-L-homoserine. The sequence is that of Homoserine O-acetyltransferase from Clostridium acetobutylicum (strain ATCC 824 / DSM 792 / JCM 1419 / IAM 19013 / LMG 5710 / NBRC 13948 / NRRL B-527 / VKM B-1787 / 2291 / W).